The primary structure comprises 383 residues: Histidine decarboxylase (383 aa).

Residue histidine 120 coordinates substrate. Lysine 233 bears the N6-(pyridoxal phosphate)lysine mark.

This sequence belongs to the group II decarboxylase family. In terms of assembly, homotetramer. Pyridoxal 5'-phosphate is required as a cofactor.

The catalysed reaction is L-histidine + H(+) = histamine + CO2. The sequence is that of Histidine decarboxylase from Acinetobacter baumannii (strain ACICU).